Reading from the N-terminus, the 230-residue chain is Type II restriction enzyme NlaIII (230 aa).

It carries out the reaction Endonucleolytic cleavage of DNA to give specific double-stranded fragments with terminal 5'-phosphates.. A P subtype restriction enzyme that recognizes the double-stranded sequence 5'-CATG-3' and cleaves after G-4. This chain is Type II restriction enzyme NlaIII (nlaIIIR), found in Neisseria lactamica.